The following is an 89-amino-acid chain: Small ribosomal subunit protein bS20 (89 aa).

It belongs to the bacterial ribosomal protein bS20 family.

Binds directly to 16S ribosomal RNA. This is Small ribosomal subunit protein bS20 from Wolbachia sp. subsp. Drosophila simulans (strain wRi).